The following is a 480-amino-acid chain: MDFSNFLCIEQELKLIALLVILFLYDTFCSKEWKKYFQNIAIVGFAIVIISEFPPYFTMYGEAFGGIHISSQLTFFMKSILNVATFLVFLQANKWLSSEKMLLRQGEFYVIMLISLLGMYFMISAENFVMLYIGMETASLPLACLVAFDKYQEKSAEAAVKYILTSALSSGVMLFGLSFLYGSLGSFYYSDIALNIVSSPLVKLGFVFFFGGLGFKLSLVPFHLWTADVYEGAPTSVTAYLSVVSKGAATFALIFVLYKVFGRIELIWNNILCWLLLATIVLGNLFAIRQQNIKRFFAFSSISQAGYILLGIIAGTAQGMTSTIFYTLVYLFSNLAAFGVIASVEYQTNGDTRIVSFNGLYRSNPGLAFVMMLAVFSLGGIPPFAGFFSKFFIFMAAAEQKQYILVFIALLNTVMSLYYYLLIVKAMFIEKRGEVVLEKIGIDNYNRISMVICTIGIFVIGFLSAIYEYIETISFGVLQK.

The next 13 membrane-spanning stretches (helical) occupy residues 5–25, 40–60, 69–89, 110–130, 162–182, 204–224, 237–257, 266–286, 296–316, 324–344, 368–388, 404–424, and 450–470; these read NFLCIEQELKLIALLVILFLY, IAIVGFAIVIISEFPPYFTMY, ISSQLTFFMKSILNVATFLVF, VIMLISLLGMYFMISAENFVM, YILTSALSSGVMLFGLSFLYG, LGFVFFFGGLGFKLSLVPFHL, VTAYLSVVSKGAATFALIFVL, LIWNNILCWLLLATIVLGNLF, FFAFSSISQAGYILLGIIAGT, IFYTLVYLFSNLAAFGVIASV, AFVMMLAVFSLGGIPPFAGFF, ILVFIALLNTVMSLYYYLLIV, and MVICTIGIFVIGFLSAIYEYI.

It belongs to the complex I subunit 2 family. In terms of assembly, NDH-1 is composed of 14 different subunits. Subunits NuoA, H, J, K, L, M, N constitute the membrane sector of the complex.

The protein localises to the cell inner membrane. The catalysed reaction is a quinone + NADH + 5 H(+)(in) = a quinol + NAD(+) + 4 H(+)(out). Functionally, NDH-1 shuttles electrons from NADH, via FMN and iron-sulfur (Fe-S) centers, to quinones in the respiratory chain. The immediate electron acceptor for the enzyme in this species is believed to be a menaquinone. Couples the redox reaction to proton translocation (for every two electrons transferred, four hydrogen ions are translocated across the cytoplasmic membrane), and thus conserves the redox energy in a proton gradient. This chain is NADH-quinone oxidoreductase subunit N, found in Azobacteroides pseudotrichonymphae genomovar. CFP2.